Here is an 885-residue protein sequence, read N- to C-terminus: DNA-directed RNA polymerase subunit Rpo1N (885 aa).

Cysteine 60, cysteine 63, cysteine 70, histidine 73, cysteine 100, cysteine 103, cysteine 150, and cysteine 153 together coordinate Zn(2+). Residues aspartate 464, aspartate 466, and aspartate 468 each contribute to the Mg(2+) site.

This sequence belongs to the RNA polymerase beta' chain family. Part of the RNA polymerase complex. Mg(2+) is required as a cofactor. The cofactor is Zn(2+).

Its subcellular location is the cytoplasm. It carries out the reaction RNA(n) + a ribonucleoside 5'-triphosphate = RNA(n+1) + diphosphate. In terms of biological role, DNA-dependent RNA polymerase (RNAP) catalyzes the transcription of DNA into RNA using the four ribonucleoside triphosphates as substrates. Forms the clamp head domain. The chain is DNA-directed RNA polymerase subunit Rpo1N from Thermoplasma acidophilum (strain ATCC 25905 / DSM 1728 / JCM 9062 / NBRC 15155 / AMRC-C165).